A 152-amino-acid polypeptide reads, in one-letter code: 3-dehydroquinate dehydratase (152 aa).

The active-site Proton acceptor is tyrosine 26. Substrate-binding residues include asparagine 77, histidine 83, and aspartate 90. Histidine 103 functions as the Proton donor in the catalytic mechanism. Substrate is bound by residues 104 to 105 (LS) and arginine 114.

This sequence belongs to the type-II 3-dehydroquinase family. As to quaternary structure, homododecamer.

It catalyses the reaction 3-dehydroquinate = 3-dehydroshikimate + H2O. It participates in metabolic intermediate biosynthesis; chorismate biosynthesis; chorismate from D-erythrose 4-phosphate and phosphoenolpyruvate: step 3/7. In terms of biological role, catalyzes a trans-dehydration via an enolate intermediate. This Synechocystis sp. (strain ATCC 27184 / PCC 6803 / Kazusa) protein is 3-dehydroquinate dehydratase (aroQ).